Reading from the N-terminus, the 61-residue chain is Insect toxin BsIT3 (61 aa).

The LCN-type CS-alpha/beta domain maps to 1-61 (DGYILNSKGC…RWTSSKNKCN (61 aa)). 4 disulfide bridges follow: Cys-10-Cys-60, Cys-14-Cys-35, Cys-21-Cys-42, and Cys-25-Cys-44.

It belongs to the long (4 C-C) scorpion toxin superfamily. Sodium channel inhibitor family. Beta subfamily. As to expression, expressed by the venom gland.

The protein resides in the secreted. Depressant insect beta-toxins cause a transient contraction paralysis followed by a slow flaccid paralysis. They bind voltage-independently at site-4 of sodium channels (Nav) and shift the voltage of activation toward more negative potentials thereby affecting sodium channel activation and promoting spontaneous and repetitive firing. This toxin is active only on insects. In Hottentotta tamulus sindicus (Scorpion), this protein is Insect toxin BsIT3.